Consider the following 453-residue polypeptide: MREVISIHIGQAGVQVGNACWELYCLEHGIQPDGLMPSSKTIGVEDDAFNTFFSETGAGKHVPRAVFLDLEPTVVDEVRTGTYRQLFHPEQLITGKEDAANNYARGHYTIGKEIVDLCLDRIRKLADNCTGLQGFLVFSSVGGGTGSGLGALLLERLSVDYGKKSKLGFTVYPSPQVATAVVEPYNSVLSTHALLEHTDVAVMLDNEAIYDICRRSLDIQRPTYTNLNRLIAQVISSLTASLRFDGALNVDVTEFQTNLVPYPRIHFMLCSYAPVISAEKAYHEQLSVAEITNSAFEPASMMAKCDPRHGKYMACCLMYRGDVVPKDVNAAVATIKTKRTIQFVDWSPTGFKCGINYQPPTVVPGGDLAKVQRAVCMISNSTAIAEVFSRIDHKFDLMYAKRAFVHWYVGEGMEEGEFSEAREDLAALEKDYEEVGTESQEGDGEEGEDGGDQ.

Position 11 (glutamine 11) interacts with GTP. Lysine 40 bears the N6-acetyllysine mark. GTP is bound by residues glutamate 71, serine 140, glycine 144, threonine 145, threonine 179, asparagine 206, and asparagine 228. Residue glutamate 71 coordinates Mg(2+). The active site involves glutamate 254. The segment at 429-453 is disordered; the sequence is EKDYEEVGTESQEGDGEEGEDGGDQ. Over residues 431 to 453 the composition is skewed to acidic residues; it reads DYEEVGTESQEGDGEEGEDGGDQ.

It belongs to the tubulin family. Dimer of alpha and beta chains. A typical microtubule is a hollow water-filled tube with an outer diameter of 25 nm and an inner diameter of 15 nM. Alpha-beta heterodimers associate head-to-tail to form protofilaments running lengthwise along the microtubule wall with the beta-tubulin subunit facing the microtubule plus end conferring a structural polarity. Microtubules usually have 13 protofilaments but different protofilament numbers can be found in some organisms and specialized cells. The cofactor is Mg(2+). Acetylation of alpha chains at Lys-40 stabilizes microtubules and affects affinity and processivity of microtubule motors. This modification has a role in multiple cellular functions, ranging from cell motility, cell cycle progression or cell differentiation to intracellular trafficking and signaling.

The protein localises to the cytoplasm. It localises to the cytoskeleton. It carries out the reaction GTP + H2O = GDP + phosphate + H(+). Its function is as follows. Tubulin is the major constituent of microtubules, a cylinder consisting of laterally associated linear protofilaments composed of alpha- and beta-tubulin heterodimers. Microtubules grow by the addition of GTP-tubulin dimers to the microtubule end, where a stabilizing cap forms. Below the cap, tubulin dimers are in GDP-bound state, owing to GTPase activity of alpha-tubulin. In Naegleria pringsheimi (Amoeba), this protein is Tubulin alpha-13 chain (TUBA13).